The chain runs to 168 residues: Large ribosomal subunit protein uL10 (168 aa).

Belongs to the universal ribosomal protein uL10 family. Part of the ribosomal stalk of the 50S ribosomal subunit. The N-terminus interacts with L11 and the large rRNA to form the base of the stalk. The C-terminus forms an elongated spine to which L12 dimers bind in a sequential fashion forming a multimeric L10(L12)X complex.

Forms part of the ribosomal stalk, playing a central role in the interaction of the ribosome with GTP-bound translation factors. The protein is Large ribosomal subunit protein uL10 of Levilactobacillus brevis (strain ATCC 367 / BCRC 12310 / CIP 105137 / JCM 1170 / LMG 11437 / NCIMB 947 / NCTC 947) (Lactobacillus brevis).